A 410-amino-acid polypeptide reads, in one-letter code: MKRTHLFIAGLYLLASCRAEEGLNFPTYDGKDRVVSLTEKNFKQVLKKYDVLCLYYHESVSSDKVAQKQFQLKEIVLELVAQVLEHKDIGFVMVDAKKEAKLAKKLGFDEEGSLYVLKGDRTIEFDGEFAADVLVEFLLDLIEDPVEIINSKLEVQAFERIEDQIKLIGFFKSEESEYYKAFEEAAEHFQPYIKFFATFDKGVAKKLSLKMNEVDFYEPFMDEPIAIPDKPYTEEELVEFVKEHQRPTLRRLRPEDMFETWEDDLNGIHIVAFAERSDPDGYEFLEILKQVARDNTDNPDLSIVWIDPDDFPLLVAYWEKTFKIDLFKPQIGVVNVTDADSVWMEIPDDDDLPTAEELEDWIEDVLSGKINTEDDDNEEGDDGDDDEDDDDDDGNNSDEESNDDSDDDDE.

Residues 1 to 19 (MKRTHLFIAGLYLLASCRA) form the signal peptide. The segment at 221–242 (MDEPIAIPDKPYTEEELVEFVK) is calcium regulated hydrophobic site. Phosphotyrosine is present on Tyr282. Asn335 and Asn395 each carry an N-linked (GlcNAc...) asparagine glycan. Positions 364-410 (DVLSGKINTEDDDNEEGDDGDDDEDDDDDDGNNSDEESNDDSDDDDE) are disordered. Over residues 373–410 (EDDDNEEGDDGDDDEDDDDDDGNNSDEESNDDSDDDDE) the composition is skewed to acidic residues. Phosphoserine; by CK2 is present on residues Ser397, Ser401, and Ser405.

The protein belongs to the calsequestrin family. Interacts with ASPH. Monomer, homodimer and homooligomer. Mostly monomeric in the absence of calcium. Forms higher oligomers in a calcium-dependent manner. Dimers associate to form tetramers, that then form linear homomer chains. Interacts with TRDN. In terms of processing, phosphorylation in the C-terminus, probably by CK2, moderately increases calcium buffering capacity. Post-translationally, N-glycosylated. As to expression, detected in heart muscle (at protein level).

The protein resides in the sarcoplasmic reticulum lumen. Functionally, calsequestrin is a high-capacity, moderate affinity, calcium-binding protein and thus acts as an internal calcium store in muscle. Calcium ions are bound by clusters of acidic residues at the protein surface, especially at the interface between subunits. Can bind around 60 Ca(2+) ions. Regulates the release of lumenal Ca(2+) via the calcium release channel RYR2; this plays an important role in triggering muscle contraction. Plays a role in excitation-contraction coupling in the heart and in regulating the rate of heart beats. This Canis lupus familiaris (Dog) protein is Calsequestrin-2 (CASQ2).